Consider the following 37-residue polypeptide: Large ribosomal subunit protein bL36 (37 aa).

This sequence belongs to the bacterial ribosomal protein bL36 family.

The protein is Large ribosomal subunit protein bL36 of Staphylococcus saprophyticus subsp. saprophyticus (strain ATCC 15305 / DSM 20229 / NCIMB 8711 / NCTC 7292 / S-41).